Reading from the N-terminus, the 998-residue chain is RNA-directed RNA polymerase (998 aa).

Residues 17-34 (LPVGIATVSGCGAVVYCI) form a helical membrane-spanning segment. A cytoplasmic region spans residues 35–998 (SKFWGYGAIA…AQPQPSNNRK (964 aa)). Positions 91–282 (NGHAVSGAVR…LVYTIPQYVI (192 aa)) are capping. Aspartate 692 functions as the For RdRp/TNTase activity in the catalytic mechanism. The interval 901 to 998 (AKQTRANPGT…AQPQPSNNRK (98 aa)) is disordered. Composition is skewed to polar residues over residues 904–913 (TRANPGTSRP) and 947–961 (GKTN…TAGE). A compositionally biased stretch (basic residues) spans 971-984 (KGPRGGKTNTRRTP).

It belongs to the nodaviridae RNA polymerase family. Homododecamer. Forms 2 stacked rings of 35-nm in diameter, arranged in a crown-like structure at the opening of virus-induced replication vesicles. Interacts with protein B2. The cofactor is Mn(2+).

It localises to the host mitochondrion outer membrane. It carries out the reaction RNA(n) + a ribonucleoside 5'-triphosphate = RNA(n+1) + diphosphate. Its activity is regulated as follows. Drastically inhibited by phosphonoacetic acid. Only slightly inhibited by gliotoxin. RNA-dependent RNA polymerase, which replicates the viral genome composed of 2 RNA segments, RNA1 and RNA2. Does not need an exogenous primer. Also possesses a terminal nucleotidyl transferase (TNTase) activity. The TNTase catalyzes the addition of nucleotide to the 3'-end of plus- and minus-stranded RNAs, probably to repair the 3'-end nucleotide loss. Forms the open necked connection to the cytosol of the virus-induced replication vesicles. Mediates viral RNA1 recruitment. This is RNA-directed RNA polymerase from Heteronychus arator (African black beetle).